Consider the following 283-residue polypeptide: GDP-polyphosphate phosphotransferase (283 aa).

Belongs to the polyphosphate kinase 2 (PPK2) family. Class I subfamily.

It carries out the reaction [phosphate](n) + GTP = [phosphate](n+1) + GDP. Functionally, uses inorganic polyphosphate (polyP) as a donor to convert GDP to GTP. This chain is GDP-polyphosphate phosphotransferase, found in Mycolicibacterium smegmatis (strain ATCC 700084 / mc(2)155) (Mycobacterium smegmatis).